A 529-amino-acid chain; its full sequence is Alkaline phosphatase, germ cell type (529 aa).

The signal sequence occupies residues 1 to 18 (MWGACLLLLGLSLQVCPS). D60 serves as a coordination point for Mg(2+). D60 and S110 together coordinate Zn(2+). The Phosphoserine intermediate role is filled by S110. C139 and C201 are disulfide-bonded. N140 carries N-linked (GlcNAc...) asparagine glycosylation. S173 contacts Mg(2+). E234 serves as a coordination point for Ca(2+). 2 N-linked (GlcNAc...) asparagine glycosylation sites follow: N267 and N277. Ca(2+)-binding residues include F287, E288, and D303. E329 provides a ligand contact to Mg(2+). Residues D334, H338, D375, H376, and H450 each contribute to the Zn(2+) site. Cysteines 485 and 492 form a disulfide. A lipid anchor (GPI-anchor amidated serine) is attached at S502. Residues 503-529 (AVSPGYMSTLLCLLAGKMLMLMAAAEP) constitute a propeptide, removed in mature form.

The protein belongs to the alkaline phosphatase family. As to quaternary structure, homodimer. The cofactor is Mg(2+). Requires Zn(2+) as cofactor. Ca(2+) serves as cofactor. Embryo and testis.

Its subcellular location is the cell membrane. The enzyme catalyses a phosphate monoester + H2O = an alcohol + phosphate. With respect to regulation, inhibited by L-leucine, EDTA and heat. Alkaline phosphatase that can hydrolyze various phosphate compounds. This Mus musculus (Mouse) protein is Alkaline phosphatase, germ cell type (Alpg).